We begin with the raw amino-acid sequence, 415 residues long: Ubp4-interactor sfp47 (415 aa).

Phosphoserine occurs at positions 221 and 226. At Thr231 the chain carries Phosphothreonine. Residue Ser235 is modified to Phosphoserine. Residues 352–415 (PIFAYVRALY…PSNYIEELEY (64 aa)) enclose the SH3 domain.

Interacts with ubp4.

It is found in the cytoplasm. The protein localises to the endosome. Required for the regulation of activity and recruitment of ubp4 to endosomes. The sequence is that of Ubp4-interactor sfp47 (sfp47) from Schizosaccharomyces pombe (strain 972 / ATCC 24843) (Fission yeast).